Here is a 150-residue protein sequence, read N- to C-terminus: SsrA-binding protein (150 aa).

This sequence belongs to the SmpB family.

It localises to the cytoplasm. Required for rescue of stalled ribosomes mediated by trans-translation. Binds to transfer-messenger RNA (tmRNA), required for stable association of tmRNA with ribosomes. tmRNA and SmpB together mimic tRNA shape, replacing the anticodon stem-loop with SmpB. tmRNA is encoded by the ssrA gene; the 2 termini fold to resemble tRNA(Ala) and it encodes a 'tag peptide', a short internal open reading frame. During trans-translation Ala-aminoacylated tmRNA acts like a tRNA, entering the A-site of stalled ribosomes, displacing the stalled mRNA. The ribosome then switches to translate the ORF on the tmRNA; the nascent peptide is terminated with the 'tag peptide' encoded by the tmRNA and targeted for degradation. The ribosome is freed to recommence translation, which seems to be the essential function of trans-translation. This chain is SsrA-binding protein, found in Borrelia garinii subsp. bavariensis (strain ATCC BAA-2496 / DSM 23469 / PBi) (Borreliella bavariensis).